We begin with the raw amino-acid sequence, 264 residues long: Undecaprenyl-diphosphatase (264 aa).

8 helical membrane passes run 1–21 (MDLIHVVVLALIQGITEFLPI), 39–59 (QGLAFDVAVHVGTLTAVAVYF), 87–107 (WYLIAATIPAALFGLIFDDLI), 111–131 (LRSTDVIATTTLVFGVLLWVA), 144–164 (IALSTAMIIGLAQAVALIPGT), 187–207 (FSFLLSIPVIVLSGGYKGLQL), 208–228 (VLSAAAVDWLAIGLGIALSAV), and 244–264 (IGMLPFVIYRLLLGVLLFIAV).

It belongs to the UppP family.

The protein resides in the cell inner membrane. The catalysed reaction is di-trans,octa-cis-undecaprenyl diphosphate + H2O = di-trans,octa-cis-undecaprenyl phosphate + phosphate + H(+). Catalyzes the dephosphorylation of undecaprenyl diphosphate (UPP). Confers resistance to bacitracin. This is Undecaprenyl-diphosphatase from Teredinibacter turnerae (strain ATCC 39867 / T7901).